The sequence spans 127 residues: UPF0212 protein VNG_1264C (127 aa).

It belongs to the UPF0212 family.

In Halobacterium salinarum (strain ATCC 700922 / JCM 11081 / NRC-1) (Halobacterium halobium), this protein is UPF0212 protein VNG_1264C.